A 100-amino-acid polypeptide reads, in one-letter code: Large ribosomal subunit protein bL21 (100 aa).

It belongs to the bacterial ribosomal protein bL21 family. As to quaternary structure, part of the 50S ribosomal subunit. Contacts protein L20.

This protein binds to 23S rRNA in the presence of protein L20. The polypeptide is Large ribosomal subunit protein bL21 (Mycoplasmopsis synoviae (strain 53) (Mycoplasma synoviae)).